Here is a 478-residue protein sequence, read N- to C-terminus: 3-isopropylmalate dehydratase large subunit (478 aa).

[4Fe-4S] cluster is bound by residues Cys357, Cys418, and Cys421.

This sequence belongs to the aconitase/IPM isomerase family. LeuC type 1 subfamily. As to quaternary structure, heterodimer of LeuC and LeuD. Requires [4Fe-4S] cluster as cofactor.

It carries out the reaction (2R,3S)-3-isopropylmalate = (2S)-2-isopropylmalate. It participates in amino-acid biosynthesis; L-leucine biosynthesis; L-leucine from 3-methyl-2-oxobutanoate: step 2/4. Catalyzes the isomerization between 2-isopropylmalate and 3-isopropylmalate, via the formation of 2-isopropylmaleate. This Novosphingobium aromaticivorans (strain ATCC 700278 / DSM 12444 / CCUG 56034 / CIP 105152 / NBRC 16084 / F199) protein is 3-isopropylmalate dehydratase large subunit.